A 105-amino-acid polypeptide reads, in one-letter code: NADH-quinone oxidoreductase subunit K (105 aa).

3 helical membrane-spanning segments follow: residues 9–29, 34–54, and 65–85; these read PNYYLVLAAVLFTIGAAGVLV, IVLFMCVELMLNAANLTLVTF, and IIAFFVMVVAAAEVVVGLAII.

This sequence belongs to the complex I subunit 4L family. As to quaternary structure, NDH-1 is composed of 14 different subunits. Subunits NuoA, H, J, K, L, M, N constitute the membrane sector of the complex.

It localises to the cell membrane. It catalyses the reaction a quinone + NADH + 5 H(+)(in) = a quinol + NAD(+) + 4 H(+)(out). NDH-1 shuttles electrons from NADH, via FMN and iron-sulfur (Fe-S) centers, to quinones in the respiratory chain. The immediate electron acceptor for the enzyme in this species is believed to be a menaquinone. Couples the redox reaction to proton translocation (for every two electrons transferred, four hydrogen ions are translocated across the cytoplasmic membrane), and thus conserves the redox energy in a proton gradient. The protein is NADH-quinone oxidoreductase subunit K of Salinispora arenicola (strain CNS-205).